The chain runs to 55 residues: Large ribosomal subunit protein bL33 (55 aa).

This sequence belongs to the bacterial ribosomal protein bL33 family.

This Buchnera aphidicola subsp. Acyrthosiphon pisum (strain 5A) protein is Large ribosomal subunit protein bL33.